We begin with the raw amino-acid sequence, 541 residues long: Pheromone B beta 1 receptor (541 aa).

Residues Met1–Pro3 lie on the Extracellular side of the membrane. Residues Glu4–Trp24 form a helical membrane-spanning segment. Residues Arg25 to Ser33 are Cytoplasmic-facing. Residues Ile34–Gly54 form a helical membrane-spanning segment. The Extracellular segment spans residues Ser55–Lys69. Residues Leu70–Glu90 traverse the membrane as a helical segment. The Cytoplasmic segment spans residues Arg91–Thr109. A helical transmembrane segment spans residues Ile110 to Val130. The Extracellular segment spans residues Gln131 to Ser150. The chain crosses the membrane as a helical span at residues Ile151–Tyr171. Residues Ala172–Leu205 lie on the Cytoplasmic side of the membrane. Residues Ile206–Phe226 traverse the membrane as a helical segment. Topologically, residues Ser227–Gly264 are extracellular. Residues Ala265–Phe285 form a helical membrane-spanning segment. The Cytoplasmic portion of the chain corresponds to Gly286–Arg541. Disordered regions lie at residues Thr364–Ser393 and Tyr414–Arg541. Residues Met372 to Gln385 show a composition bias toward pro residues. The span at Pro420–Thr429 shows a compositional bias: low complexity. 2 stretches are compositionally biased toward pro residues: residues Ile467–His478 and Ser493–Pro502.

It belongs to the G-protein coupled receptor 4 family.

Its subcellular location is the membrane. In terms of biological role, receptor for the BBP1 pheromone, a prenylated mating factor. This is Pheromone B beta 1 receptor (BBR1) from Schizophyllum commune (Split gill fungus).